Reading from the N-terminus, the 418-residue chain is Glutamyl-tRNA reductase (418 aa).

Substrate contacts are provided by residues 49–52 (TCNR), Ser109, 114–116 (EPQ), and Gln120. Cys50 functions as the Nucleophile in the catalytic mechanism. NADP(+) is bound at residue 189–194 (GAGETI).

This sequence belongs to the glutamyl-tRNA reductase family. In terms of assembly, homodimer.

It carries out the reaction (S)-4-amino-5-oxopentanoate + tRNA(Glu) + NADP(+) = L-glutamyl-tRNA(Glu) + NADPH + H(+). It participates in porphyrin-containing compound metabolism; protoporphyrin-IX biosynthesis; 5-aminolevulinate from L-glutamyl-tRNA(Glu): step 1/2. In terms of biological role, catalyzes the NADPH-dependent reduction of glutamyl-tRNA(Glu) to glutamate 1-semialdehyde (GSA). This chain is Glutamyl-tRNA reductase, found in Pectobacterium atrosepticum (strain SCRI 1043 / ATCC BAA-672) (Erwinia carotovora subsp. atroseptica).